Consider the following 219-residue polypeptide: Thiopurine S-methyltransferase (219 aa).

S-adenosyl-L-methionine is bound by residues Trp-10, Leu-45, Glu-66, and Arg-123.

It belongs to the class I-like SAM-binding methyltransferase superfamily. TPMT family.

The protein resides in the cytoplasm. The catalysed reaction is S-adenosyl-L-methionine + a thiopurine = S-adenosyl-L-homocysteine + a thiopurine S-methylether.. The polypeptide is Thiopurine S-methyltransferase (Marinobacter nauticus (strain ATCC 700491 / DSM 11845 / VT8) (Marinobacter aquaeolei)).